The primary structure comprises 73 residues: Translation initiation factor IF-1 (73 aa).

Positions 1–73 (MSEKEAGIEV…SRGRITYRDK (73 aa)) constitute an S1-like domain.

Belongs to the IF-1 family. In terms of assembly, component of the 30S ribosomal translation pre-initiation complex which assembles on the 30S ribosome in the order IF-2 and IF-3, IF-1 and N-formylmethionyl-tRNA(fMet); mRNA recruitment can occur at any time during PIC assembly.

It localises to the cytoplasm. In terms of biological role, one of the essential components for the initiation of protein synthesis. Stabilizes the binding of IF-2 and IF-3 on the 30S subunit to which N-formylmethionyl-tRNA(fMet) subsequently binds. Helps modulate mRNA selection, yielding the 30S pre-initiation complex (PIC). Upon addition of the 50S ribosomal subunit IF-1, IF-2 and IF-3 are released leaving the mature 70S translation initiation complex. The sequence is that of Translation initiation factor IF-1 from Anaeromyxobacter dehalogenans (strain 2CP-C).